The chain runs to 1234 residues: Coiled-coil domain-containing protein CG32809 (1234 aa).

Residues Met-1–Ser-11 show a composition bias toward basic and acidic residues. Disordered stretches follow at residues Met-1–Gln-88, Lys-107–Asp-129, and Lys-330–Glu-350. Over residues Ala-12–Ser-25 the composition is skewed to low complexity. The segment covering Gly-55 to Arg-69 has biased composition (basic and acidic residues). A coiled-coil region spans residues His-412–Asn-436. Residues Asp-498–Leu-548 are disordered. Coiled coils occupy residues Glu-565 to Gln-594 and Thr-630 to Asn-666. Disordered regions lie at residues Glu-754 to Gly-793, Ile-815 to Ala-852, Leu-928 to Gln-1011, and Ser-1028 to Asn-1070. Composition is skewed to low complexity over residues Gln-817–Gln-837, Thr-952–Ser-965, Thr-993–Ser-1004, Ser-1028–Ala-1039, and Val-1046–Ser-1068. Residues Val-1077–Lys-1105 adopt a coiled-coil conformation.

This chain is Coiled-coil domain-containing protein CG32809, found in Drosophila melanogaster (Fruit fly).